The sequence spans 504 residues: Multidrug efflux pump LfrA (504 aa).

The next 14 membrane-spanning stretches (helical) occupy residues 19–39, 58–78, 87–107, 110–130, 145–165, 172–192, 206–226, 233–253, 275–295, 309–329, 338–358, 361–381, 408–428, and 480–500; these read WVALAVLALPVLLIAIDNTVL, LWIVDVYSLVLAALLVAMGSL, LLLIGGAGFAVVSALAAFAPS, LLVGARALLGVFGAMLMPSTL, LAIAIWASCFTAGSALGPIVG, FHWGAVFLVAVPILLPLLVLG, PFDPVSIVLSFTTMLPIVWAV, GLSAAAAAAFAVGIVSGALFV, TSSILANFLSIIGLIGFIFFI, TAGLVTLPGAVVSMIAGLAVV, DTLMVTGLVFVAVGFLMILLF, NLTVAAIIASFVVLELGVGVS, AYELGAVVGTATLGTIFTAFY, and IAPTAVIAAMLVLAAAAVVGV.

The protein belongs to the major facilitator superfamily.

The protein resides in the cell inner membrane. Its activity is regulated as follows. Inhibited by the protonophore carbonyl cyanide m-chorophenylhydrazone (CCCP). Ethidium bromide efflux is inhibited by chlorpromazine, thioridazine and verapamil. Functionally, energy-dependent efflux pump that contributes to drug resistance. Catalyzes the efflux of norfloxacin and several related fluoroquinolones (FQ). Contributes significantly to the intrinsic MICs for ethidium bromide and acriflavine. Overexpression confers low-level resistance to hydrophilic FQ such as ciprofloxacin, ofloxacin and levofloxacin, and to ethidium bromide, acridine, acriflavine, rhodamine 123 and some quaternary ammonium compounds. May contribute to resistance to certain beta-lactams. Probably uses the proton motive force to export drugs. The polypeptide is Multidrug efflux pump LfrA (Mycolicibacterium smegmatis (strain ATCC 700084 / mc(2)155) (Mycobacterium smegmatis)).